A 177-amino-acid polypeptide reads, in one-letter code: Putative rubredoxin (177 aa).

The region spanning 1-38 (MKICRICGYQIPEGEFNLLEDGWVCPRCGVGKEELQDS) is the Rubredoxin-like domain. Cysteine 4, cysteine 7, cysteine 25, and cysteine 28 together coordinate Fe cation.

The protein belongs to the rubredoxin family. Fe(3+) serves as cofactor.

This chain is Putative rubredoxin (rdxA), found in Methanothermobacter thermautotrophicus (strain ATCC 29096 / DSM 1053 / JCM 10044 / NBRC 100330 / Delta H) (Methanobacterium thermoautotrophicum).